We begin with the raw amino-acid sequence, 452 residues long: Probable ECA polymerase (452 aa).

11 consecutive transmembrane segments (helical) span residues 6–26 (FSGL…LTWF), 37–57 (VFFS…TSVL), 63–83 (VGVA…CFYG), 118–138 (VILM…NGFL), 155–175 (GVAL…VYFL), 181–201 (AWLF…MIVG), 207–227 (IIIA…ISLW), 228–248 (MLAA…LKRY), 341–361 (LVVM…GLII), 378–398 (YKAA…IVLA), and 410–430 (VFFL…FWLF).

It belongs to the WzyE family. As to quaternary structure, probably part of a complex composed of WzxE, WzyE and WzzE.

The protein resides in the cell inner membrane. The protein operates within bacterial outer membrane biogenesis; enterobacterial common antigen biosynthesis. Its function is as follows. Probably involved in the polymerization of enterobacterial common antigen (ECA) trisaccharide repeat units. This Salmonella heidelberg (strain SL476) protein is Probable ECA polymerase.